Reading from the N-terminus, the 265-residue chain is Ribosomal RNA small subunit methyltransferase A (265 aa).

Residues Asn-13, Leu-15, Gly-39, Glu-59, Asp-87, and Asn-108 each contribute to the S-adenosyl-L-methionine site.

The protein belongs to the class I-like SAM-binding methyltransferase superfamily. rRNA adenine N(6)-methyltransferase family. RsmA subfamily.

It localises to the cytoplasm. It carries out the reaction adenosine(1518)/adenosine(1519) in 16S rRNA + 4 S-adenosyl-L-methionine = N(6)-dimethyladenosine(1518)/N(6)-dimethyladenosine(1519) in 16S rRNA + 4 S-adenosyl-L-homocysteine + 4 H(+). In terms of biological role, specifically dimethylates two adjacent adenosines (A1518 and A1519) in the loop of a conserved hairpin near the 3'-end of 16S rRNA in the 30S particle. May play a critical role in biogenesis of 30S subunits. The chain is Ribosomal RNA small subunit methyltransferase A from Aliarcobacter butzleri (strain RM4018) (Arcobacter butzleri).